The chain runs to 320 residues: GMP reductase (320 aa).

The Thioimidate intermediate role is filled by cysteine 174. 203–226 lines the NADP(+) pocket; the sequence is IIADGGLRVHGDIAKSIRMGASFC.

Belongs to the IMPDH/GMPR family. GuaC type 2 subfamily.

The enzyme catalyses IMP + NH4(+) + NADP(+) = GMP + NADPH + 2 H(+). Catalyzes the irreversible NADPH-dependent deamination of GMP to IMP. It functions in the conversion of nucleobase, nucleoside and nucleotide derivatives of G to A nucleotides, and in maintaining the intracellular balance of A and G nucleotides. The polypeptide is GMP reductase (Mycoplasma mycoides subsp. mycoides SC (strain CCUG 32753 / NCTC 10114 / PG1)).